The chain runs to 334 residues: Catabolite repressor/activator (334 aa).

Residues 1 to 58 form the HTH lacI-type domain; the sequence is MKLDEIARLAGVSRTTASYVINGKAKQYRVSDKTVEKVMAVVREHNYHPNAVAAGLRA. The H-T-H motif DNA-binding region spans 3-22; it reads LDEIARLAGVSRTTASYVIN.

Homotetramer.

Its function is as follows. Global transcriptional regulator, which plays an important role in the regulation of carbon metabolism. The sequence is that of Catabolite repressor/activator (cra) from Salmonella typhimurium (strain LT2 / SGSC1412 / ATCC 700720).